A 216-amino-acid chain; its full sequence is Ribosomal RNA small subunit methyltransferase G (216 aa).

S-adenosyl-L-methionine contacts are provided by residues Gly81, Leu86, 132 to 133, and Arg147; that span reads VE.

The protein belongs to the methyltransferase superfamily. RNA methyltransferase RsmG family.

The protein localises to the cytoplasm. The enzyme catalyses guanosine(527) in 16S rRNA + S-adenosyl-L-methionine = N(7)-methylguanosine(527) in 16S rRNA + S-adenosyl-L-homocysteine. Functionally, specifically methylates the N7 position of guanine in position 527 of 16S rRNA. This Hydrogenovibrio crunogenus (strain DSM 25203 / XCL-2) (Thiomicrospira crunogena) protein is Ribosomal RNA small subunit methyltransferase G.